A 595-amino-acid polypeptide reads, in one-letter code: MEKLSTAASLFCVVVAATALAMAVVGGEAAVVEQTFMVHEMNVTHLCNTTKIYVVNGRFPGPTVDVTEGDTVVVHVINRLPHGLTIHWHGVRQMRSCWADGAGYVTECPIHPGGEKTYRFNVTGQVGTLWWHAHVTCLRATINGAFIIRPRNGKYPFLTPAKDVPIIIGEWWELDLIELDRRMLDGNFDDNPLSATINGKLGDLSNCSSTVEESFVLDVKRGESYLLRVINTALFSEYYFKVAGHTFTVVGADGNYLTPYKTDMVTVAPGEAIDVLMFTDAPPAYYHMVALANQPPPPDLQIPQLTSRGLIRYAGAAMDSNNLPMPMPVMPDQHNTMPSYYFRRNLTGLALPEQQQRHRVPAHVDERLLITLGLGSICRGGNTTTCKRGRSPETVVVATMNNVSFHHTNATALLEHYYDGRPEGVYTEDFPVRPPRPFNYTDRELIPAGPLEAALEPTAKAMRLRRFRYNASVEIVFQSTTLLQSDSNPMHLHGYDVFVLAQGLGNFDPKRDVEKFNYHNPQLRNTVQVPRGGWAAVRFLADNPGMWYLHCHFEFHIIMGMATAFIVEDGPTPETSLPPPPPEFKRCGTNGLSQP.

The first 29 residues, 1–29 (MEKLSTAASLFCVVVAATALAMAVVGGEA), serve as a signal peptide directing secretion. 2 Plastocyanin-like domains span residues 37–153 (MVHE…PRNG) and 162–316 (KDVP…YAGA). 2 N-linked (GlcNAc...) asparagine glycosylation sites follow: Asn-42 and Asn-48. Cu cation-binding residues include His-87 and His-89. Asn-121 is a glycosylation site (N-linked (GlcNAc...) asparagine). Cu cation is bound by residues His-132 and His-134. 7 N-linked (GlcNAc...) asparagine glycosylation sites follow: Asn-206, Asn-345, Asn-382, Asn-402, Asn-409, Asn-439, and Asn-470. One can recognise a Plastocyanin-like 3 domain in the interval 429-571 (DFPVRPPRPF…ATAFIVEDGP (143 aa)). Residues Asn-488, His-491, His-493, His-550, Cys-551, His-552, His-556, and Met-561 each coordinate Cu cation. The tract at residues 570–595 (GPTPETSLPPPPPEFKRCGTNGLSQP) is disordered.

It belongs to the multicopper oxidase family. Requires Cu cation as cofactor.

The protein localises to the secreted. Its subcellular location is the extracellular space. It is found in the apoplast. The catalysed reaction is 4 hydroquinone + O2 = 4 benzosemiquinone + 2 H2O. Its function is as follows. Lignin degradation and detoxification of lignin-derived products. This chain is Laccase-18 (LAC18), found in Oryza sativa subsp. japonica (Rice).